Here is a 944-residue protein sequence, read N- to C-terminus: Isoleucine--tRNA ligase (944 aa).

Residues 58 to 68 carry the 'HIGH' region motif; that stretch reads PYANGSIHIGH. L-isoleucyl-5'-AMP is bound at residue E563. The short motif at 604-608 is the 'KMSKS' region element; that stretch reads KMSKS. K607 is an ATP binding site. Zn(2+) is bound by residues C907, C910, C927, and C930.

The protein belongs to the class-I aminoacyl-tRNA synthetase family. IleS type 1 subfamily. In terms of assembly, monomer. Requires Zn(2+) as cofactor.

It localises to the cytoplasm. It carries out the reaction tRNA(Ile) + L-isoleucine + ATP = L-isoleucyl-tRNA(Ile) + AMP + diphosphate. Its function is as follows. Catalyzes the attachment of isoleucine to tRNA(Ile). As IleRS can inadvertently accommodate and process structurally similar amino acids such as valine, to avoid such errors it has two additional distinct tRNA(Ile)-dependent editing activities. One activity is designated as 'pretransfer' editing and involves the hydrolysis of activated Val-AMP. The other activity is designated 'posttransfer' editing and involves deacylation of mischarged Val-tRNA(Ile). This is Isoleucine--tRNA ligase from Salmonella typhimurium (strain LT2 / SGSC1412 / ATCC 700720).